The primary structure comprises 131 residues: Profilin-10 (131 aa).

The cysteines at positions 13 and 115 are disulfide-linked. The Involved in PIP2 interaction motif lies at 81-97 (AVIRGKKGSGGITVKKT). Threonine 111 carries the phosphothreonine modification.

The protein belongs to the profilin family. As to quaternary structure, occurs in many kinds of cells as a complex with monomeric actin in a 1:1 ratio. In terms of processing, phosphorylated by MAP kinases.

Its subcellular location is the cytoplasm. It is found in the cytoskeleton. Its function is as follows. Binds to actin and affects the structure of the cytoskeleton. At high concentrations, profilin prevents the polymerization of actin, whereas it enhances it at low concentrations. This Zea mays (Maize) protein is Profilin-10.